Here is a 977-residue protein sequence, read N- to C-terminus: Short transient receptor potential channel 4 (977 aa).

Over 1-324 (MAQFYYKRNV…YDEFPGWRRR (324 aa)) the chain is Cytoplasmic. ANK repeat units follow at residues 29–60 (LSPSEKAYLNAVEKGDYASVKKSLEEAEIYFK), 71–93 (RTALLIAIENENLELIELLLSFN), 96–118 (VGDALLHAIRKEVVGAVELLLNH), and 141–165 (PDITPIILAAHTNNYEIIKLLVQKG). Zn(2+) contacts are provided by H172, C176, C178, and C181. The stretch at 223–260 (LSWELQELSKVENEFKSEYEELSRQCKQFAKDLLDQTR) forms a coiled coil. The discontinuously helical intramembrane region spans 325 to 359 (HWAVKMVTCFIIGLLFPVFSVCYLIAPKSPLGLFI). Residues 360 to 362 (RKP) are Cytoplasmic-facing. Residues 363-383 (FIKFICHTASYLTFLFLLLLA) traverse the membrane as a helical segment. The Extracellular segment spans residues 384–403 (SQHIDRSDLNRQGPPPTIVE). A helical membrane pass occupies residues 404-418 (WMILPWVLGFIWGEI). The Ca(2+) site is built by E417, Q420, N435, and D438. Residues 419–432 (KQMWDGGLQDYIHD) are Cytoplasmic-facing. The chain crosses the membrane as a helical span at residues 433 to 453 (WWNLMDFVMNSLYLATISLKI). The Extracellular segment spans residues 454 to 475 (VAFVKYSALNPRESWDMWHPTL). Residues 476-498 (VAEALFAIANIFSSLRLISLFTA) form a helical membrane-spanning segment. The Cytoplasmic segment spans residues 499–511 (NSHLGPLQISLGR). The helical transmembrane segment at 512–534 (MLLDILKFLFIYCLVLLAFANGL) threads the bilayer. The Extracellular segment spans residues 535-599 (NQLYFYYEET…HEFTDFVGAT (65 aa)). C549 and C554 are oxidised to a cystine. The helical transmembrane segment at 600 to 620 (MFGTYNVISLVVLLNMLIAMM) threads the bilayer. The interaction with ITPR1, ITPR2 and ITPR3 stretch occupies residues 615–977 (MLIAMMNNSY…AHEDYVTTRL (363 aa)). The Cytoplasmic portion of the chain corresponds to 621–977 (NNSYQLIADH…AHEDYVTTRL (357 aa)). Residues 767 to 790 (AASSASSADSDEKSHSEGNGKDKR) are disordered. Positions 776-787 (SDEKSHSEGNGK) are enriched in basic and acidic residues. A phosphotyrosine; by FYN mark is found at Y959 and Y972. The segment at 975–977 (TRL) is PDZ-binding domain.

The protein belongs to the transient receptor (TC 1.A.4) family. STrpC subfamily. TRPC4 sub-subfamily. In terms of assembly, homotetramer. Heterotetramer with TRPC1 and/or TRPC5. Forms a heteromeric ion channel with TRPC1, with a 1:3 TRPC1:TRPC4 stoichiometry. Interacts with TRPC4AP. Isoform alpha but not isoform beta interacts with ITPR1, ITPR2 and ITPR3. Interacts with NHERF1. Interacts with MX1 and RNF24. Interacts (via CIRB domain) with SESTD1 (via the spectrin 1 repeat) and SPTBN5 (via C-terminus). Interacts with CDH5 and CTNNB1. Interacts (via protein 4.1-binding domain) with EPB41L2. Interacts with PLSCR1.

The protein localises to the cell membrane. It catalyses the reaction Ca(2+)(in) = Ca(2+)(out). The catalysed reaction is Na(+)(in) = Na(+)(out). It carries out the reaction Li(+)(in) = Li(+)(out). The enzyme catalyses Cs(+)(in) = Cs(+)(out). Its activity is regulated as follows. May be operated by a phosphatidylinositol second messenger system activated by receptor tyrosine kinases or G-protein coupled receptors. May be activated by intracellular calcium store depletion. Forms a receptor-activated non-selective calcium permeant cation channel. Acts as a cell-cell contact-dependent endothelial calcium entry channel. Forms a homomeric ion channel or a heteromeric ion channel with TRPC1; the heteromeric ion channel has reduced calcium permeability compared to the homomeric channel. Also permeable to monovalent ions including sodium, lithium and cesium ions. Its function is as follows. Forms a non-selective a receptor-activated calcium permeant cation channel. Probably is operated by a phosphatidylinositol second messenger system activated by receptor tyrosine kinases or G-protein coupled receptors. The polypeptide is Short transient receptor potential channel 4 (Trpc4) (Rattus norvegicus (Rat)).